Here is a 317-residue protein sequence, read N- to C-terminus: Methionyl-tRNA formyltransferase (317 aa).

112 to 115 (SLLP) is a binding site for (6S)-5,6,7,8-tetrahydrofolate.

Belongs to the Fmt family.

It carries out the reaction L-methionyl-tRNA(fMet) + (6R)-10-formyltetrahydrofolate = N-formyl-L-methionyl-tRNA(fMet) + (6S)-5,6,7,8-tetrahydrofolate + H(+). In terms of biological role, attaches a formyl group to the free amino group of methionyl-tRNA(fMet). The formyl group appears to play a dual role in the initiator identity of N-formylmethionyl-tRNA by promoting its recognition by IF2 and preventing the misappropriation of this tRNA by the elongation apparatus. The sequence is that of Methionyl-tRNA formyltransferase from Mesorhizobium japonicum (strain LMG 29417 / CECT 9101 / MAFF 303099) (Mesorhizobium loti (strain MAFF 303099)).